A 215-amino-acid polypeptide reads, in one-letter code: Nascent polypeptide-associated complex subunit alpha-2 (215 aa).

The segment at 1–51 (MPGEATETVPATEQELPQSQAETGSGTASDSGESVPGIEEQDSTQTTTQKA) is disordered. Over residues 9–32 (VPATEQELPQSQAETGSGTASDSG) the composition is skewed to polar residues. Phosphoserine is present on residues Ser-43 and Ser-132. Residues 70–135 (SRSEKRARKA…AKIQDLSQQA (66 aa)) enclose the NAC-A/B domain. Lys-142 bears the N6-acetyllysine; alternate mark. Residue Lys-142 forms a Glycyl lysine isopeptide (Lys-Gly) (interchain with G-Cter in SUMO2); alternate linkage. Residue Thr-161 is modified to Phosphothreonine. 4 positions are modified to phosphoserine: Ser-166, Ser-186, Ser-191, and Ser-203. Residues 176–213 (VEVKDVKLVMSQANVSRAKAVRALKNNSNDIVNAIMEL) enclose the UBA domain. At Thr-214 the chain carries Phosphothreonine.

Belongs to the NAC-alpha family. In terms of assembly, part of the nascent polypeptide-associated complex (NAC), consisting of NACA and BTF3. NAC associates with ribosomes through the BTF3 subunit. Both subunits can contact nascent polypeptide chains. As to expression, expressed specifically in testis and skeletal muscle.

It is found in the cytoplasm. Its subcellular location is the nucleus. Its function is as follows. Prevents inappropriate targeting of non-secretory polypeptides to the endoplasmic reticulum (ER). Binds to nascent polypeptide chains as they emerge from the ribosome and blocks their interaction with the signal recognition particle (SRP), which normally targets nascent secretory peptides to the ER. Also reduces the inherent affinity of ribosomes for protein translocation sites in the ER membrane (M sites). The sequence is that of Nascent polypeptide-associated complex subunit alpha-2 (NACA2) from Homo sapiens (Human).